A 109-amino-acid polypeptide reads, in one-letter code: Phosphoribosyl-AMP cyclohydrolase (109 aa).

Residue aspartate 76 participates in Mg(2+) binding. Zn(2+) is bound at residue cysteine 77. Aspartate 78 and aspartate 80 together coordinate Mg(2+). Zn(2+) is bound by residues cysteine 93 and cysteine 100.

The protein belongs to the PRA-CH family. In terms of assembly, homodimer. The cofactor is Mg(2+). Zn(2+) serves as cofactor.

The protein resides in the cytoplasm. It carries out the reaction 1-(5-phospho-beta-D-ribosyl)-5'-AMP + H2O = 1-(5-phospho-beta-D-ribosyl)-5-[(5-phospho-beta-D-ribosylamino)methylideneamino]imidazole-4-carboxamide. The protein operates within amino-acid biosynthesis; L-histidine biosynthesis; L-histidine from 5-phospho-alpha-D-ribose 1-diphosphate: step 3/9. Catalyzes the hydrolysis of the adenine ring of phosphoribosyl-AMP. In Streptococcus mutans serotype c (strain ATCC 700610 / UA159), this protein is Phosphoribosyl-AMP cyclohydrolase.